Here is a 59-residue protein sequence, read N- to C-terminus: Potassium channel toxin alpha-KTx 16.2 (59 aa).

The first 22 residues, 1–22 (MKIFSILLVALIICSISICTEA), serve as a signal peptide directing secretion. 3 disulfides stabilise this stretch: Cys-30/Cys-51, Cys-36/Cys-56, and Cys-40/Cys-58.

This sequence belongs to the short scorpion toxin superfamily. Potassium channel inhibitor family. Alpha-KTx 16 subfamily. As to expression, expressed by the venom gland.

It localises to the secreted. Functionally, alpha-KTx 16.2: inhibits large conductance calcium-activated potassium channels (KCa1.1/Slo-beta4 KCNMA1/KCNMB4). It appears to block channel activity by a simple bimolecular inhibition process. Shows a fast association rate and a slow dissociation rate of binding on rat brain synaptosome. Significantly inhibits voltage-dependent sodium current and voltage-dependent delayed rectifier potassium currents. Its function is as follows. Significantly inhibits voltage-dependent sodium current (Nav) and voltage-dependent delayed rectifier potassium current. This chain is Potassium channel toxin alpha-KTx 16.2, found in Olivierus martensii (Manchurian scorpion).